Reading from the N-terminus, the 450-residue chain is Probable ECA polymerase (450 aa).

11 helical membrane-spanning segments follow: residues 6-26 (FSGL…LTWF), 37-57 (VFFS…TSVL), 63-83 (VGVA…CFYA), 118-138 (VILM…NGFL), 155-175 (GVAL…VYFL), 181-201 (AWLF…MIVG), 207-227 (IIIA…ISLW), 228-248 (MLAA…LKRY), 341-361 (LVVM…GLII), 378-398 (YKAA…IVLA), and 410-430 (VFFI…YWLF).

Belongs to the WzyE family. Probably part of a complex composed of WzxE, WzyE and WzzE.

The protein resides in the cell inner membrane. It functions in the pathway bacterial outer membrane biogenesis; enterobacterial common antigen biosynthesis. Probably involved in the polymerization of enterobacterial common antigen (ECA) trisaccharide repeat units. This Shigella sonnei (strain Ss046) protein is Probable ECA polymerase.